Here is a 357-residue protein sequence, read N- to C-terminus: Protein-glutamate methylesterase/protein-glutamine glutaminase (357 aa).

The Response regulatory domain occupies 3 to 120 (RVLVVDDSAF…SLDLYKIKEQ (118 aa)). The residue at position 54 (Asp-54) is a 4-aspartylphosphate. Positions 161 to 355 (PGTGRQIVCI…ASITSCVKKE (195 aa)) constitute a CheB-type methylesterase domain. Active-site residues include Ser-173, His-200, and Asp-296.

It belongs to the CheB family. In terms of processing, phosphorylated by CheA. Phosphorylation of the N-terminal regulatory domain activates the methylesterase activity.

It localises to the cytoplasm. The catalysed reaction is [protein]-L-glutamate 5-O-methyl ester + H2O = L-glutamyl-[protein] + methanol + H(+). The enzyme catalyses L-glutaminyl-[protein] + H2O = L-glutamyl-[protein] + NH4(+). Functionally, involved in the modulation of the chemotaxis system; catalyzes the demethylation of specific methylglutamate residues introduced into the chemoreceptors (methyl-accepting chemotaxis proteins) by CheR. B.subtilis has an effective methylation-independent adaptation system but must utilize the methylation system for adaptation to high concentrations of attractant. In Bacillus subtilis (strain 168), this protein is Protein-glutamate methylesterase/protein-glutamine glutaminase.